The sequence spans 389 residues: tRNA-specific 2-thiouridylase MnmA (389 aa).

ATP-binding positions include 34-41 (AMSGGVDS) and L60. Catalysis depends on C128, which acts as the Nucleophile. A disulfide bond links C128 and C225. G152 is a binding site for ATP. The interaction with tRNA stretch occupies residues 174 to 176 (RDQ). C225 (cysteine persulfide intermediate) is an active-site residue.

The protein belongs to the MnmA/TRMU family.

The protein resides in the cytoplasm. It carries out the reaction S-sulfanyl-L-cysteinyl-[protein] + uridine(34) in tRNA + AH2 + ATP = 2-thiouridine(34) in tRNA + L-cysteinyl-[protein] + A + AMP + diphosphate + H(+). Its function is as follows. Catalyzes the 2-thiolation of uridine at the wobble position (U34) of tRNA, leading to the formation of s(2)U34. This Paracoccus denitrificans (strain Pd 1222) protein is tRNA-specific 2-thiouridylase MnmA.